Reading from the N-terminus, the 747-residue chain is Protein FAM83C (747 aa).

The segment at 1–309 (MFGGPGPGVL…LYAESQPVEG (309 aa)) is DUF1669. Disordered regions lie at residues 322–352 (LRPP…SSIK), 374–412 (TGVV…LYRA), 462–484 (LSRF…GRWV), 517–550 (AREV…SPSQ), 588–633 (NQSR…LGHS), 646–672 (GEGP…DEKR), and 692–715 (ARQG…DLVR). A compositionally biased stretch (low complexity) spans 328-350 (ALAFRPDVPSPTSSLPSSTSLSS). Positions 390–402 (GQPSLHRQLSDPN) are enriched in polar residues. Residues 697 to 707 (EPGGPKGGHLN) are compositionally biased toward gly residues.

Belongs to the FAM83 family. May interact with RAF1. Phosphorylated in vitro by CSNK1A1.

It localises to the cytoplasm. Its function is as follows. May play a role in MAPK signaling. The chain is Protein FAM83C from Homo sapiens (Human).